Reading from the N-terminus, the 146-residue chain is Acidic phospholipase A2 S8-51 (146 aa).

The signal sequence occupies residues Met-1–Ala-19. Positions Ala-20–Leu-27 are excised as a propeptide. Intrachain disulfides connect Cys-38–Cys-98, Cys-54–Cys-145, Cys-56–Cys-72, Cys-71–Cys-126, Cys-78–Cys-119, Cys-87–Cys-112, and Cys-105–Cys-117. Residues Tyr-55, Gly-57, and Gly-59 each contribute to the Ca(2+) site. His-75 is a catalytic residue. Residue Asp-76 participates in Ca(2+) binding. Asp-120 is an active-site residue.

The protein belongs to the phospholipase A2 family. Group I subfamily. D49 sub-subfamily. Ca(2+) is required as a cofactor. Expressed by the venom gland.

Its subcellular location is the secreted. The catalysed reaction is a 1,2-diacyl-sn-glycero-3-phosphocholine + H2O = a 1-acyl-sn-glycero-3-phosphocholine + a fatty acid + H(+). Functionally, snake venom phospholipase A2 (PLA2) that inhibits collagen-induced platelet aggregation. PLA2 catalyzes the calcium-dependent hydrolysis of the 2-acyl groups in 3-sn-phosphoglycerides. This chain is Acidic phospholipase A2 S8-51, found in Austrelaps superbus (Lowland copperhead snake).